A 909-amino-acid chain; its full sequence is Lon protease homolog 2, peroxisomal (909 aa).

The Lon N-terminal domain maps to 1-230 (MAPVRAPTAR…KVIELLDRQV (230 aa)). The interval 249-269 (FPMDPDSTKPGKVKPPVKAPG) is disordered. ATP is bound at residue 463–470 (GPPGVGKT). The Lon proteolytic domain occupies 706 to 893 (TSRPGIVTGL…WEAIRYVWPD (188 aa)). Residues Ser-799 and Lys-842 contribute to the active site. A Microbody targeting signal motif is present at residues 907 to 909 (SRL).

The protein belongs to the peptidase S16 family.

Its subcellular location is the peroxisome matrix. The protein resides in the cytoplasm. The catalysed reaction is Hydrolysis of proteins in presence of ATP.. Functionally, ATP-dependent serine protease that mediates the selective degradation of misfolded and unassembled polypeptides in the peroxisomal matrix. Necessary for type 2 peroxisome targeting signal (PTS2)-containing protein processing and facilitates peroxisome matrix protein import. The chain is Lon protease homolog 2, peroxisomal from Sordaria macrospora (strain ATCC MYA-333 / DSM 997 / K(L3346) / K-hell).